Consider the following 287-residue polypeptide: mRNA-capping enzyme small subunit (287 aa).

In terms of assembly, heterodimer of a large and a small subunit.

Its subcellular location is the virion. It catalyses the reaction a 5'-end (5'-triphosphoguanosine)-ribonucleoside in mRNA + S-adenosyl-L-methionine = a 5'-end (N(7)-methyl 5'-triphosphoguanosine)-ribonucleoside in mRNA + S-adenosyl-L-homocysteine. In terms of biological role, catalyzes the last reaction in the mRNA cap formation pathway. This is mRNA-capping enzyme small subunit from Erythrocebus patas (Red guenon).